The chain runs to 189 residues: Large ribosomal subunit protein bL9 (189 aa).

Belongs to the bacterial ribosomal protein bL9 family.

Binds to the 23S rRNA. The polypeptide is Large ribosomal subunit protein bL9 (Cereibacter sphaeroides (strain KD131 / KCTC 12085) (Rhodobacter sphaeroides)).